A 217-amino-acid chain; its full sequence is GTP cyclohydrolase 1 (217 aa).

Residues Cys109, His112, and Cys180 each contribute to the Zn(2+) site.

Belongs to the GTP cyclohydrolase I family. In terms of assembly, toroid-shaped homodecamer, composed of two pentamers of five dimers.

The enzyme catalyses GTP + H2O = 7,8-dihydroneopterin 3'-triphosphate + formate + H(+). It functions in the pathway cofactor biosynthesis; 7,8-dihydroneopterin triphosphate biosynthesis; 7,8-dihydroneopterin triphosphate from GTP: step 1/1. The polypeptide is GTP cyclohydrolase 1 (Vibrio cholerae serotype O1 (strain ATCC 39315 / El Tor Inaba N16961)).